Consider the following 339-residue polypeptide: DNA-directed RNA polymerase subunit alpha (339 aa).

The tract at residues 1–233 (MVREEVAGST…DLFLPFLHAE (233 aa)) is alpha N-terminal domain (alpha-NTD). The interval 264 to 339 (KKGIPLNCIF…IDLLKNKLSF (76 aa)) is alpha C-terminal domain (alpha-CTD).

It belongs to the RNA polymerase alpha chain family. In plastids the minimal PEP RNA polymerase catalytic core is composed of four subunits: alpha, beta, beta', and beta''. When a (nuclear-encoded) sigma factor is associated with the core the holoenzyme is formed, which can initiate transcription.

Its subcellular location is the plastid. The protein resides in the chloroplast. It catalyses the reaction RNA(n) + a ribonucleoside 5'-triphosphate = RNA(n+1) + diphosphate. DNA-dependent RNA polymerase catalyzes the transcription of DNA into RNA using the four ribonucleoside triphosphates as substrates. The chain is DNA-directed RNA polymerase subunit alpha from Agropyron cristatum (Crested wheatgrass).